A 204-amino-acid polypeptide reads, in one-letter code: Large ribosomal subunit protein eL15 (204 aa).

It belongs to the eukaryotic ribosomal protein eL15 family. Component of the large ribosomal subunit.

It is found in the cytoplasm. Its function is as follows. Component of the large ribosomal subunit. The ribosome is a large ribonucleoprotein complex responsible for the synthesis of proteins in the cell. The protein is Large ribosomal subunit protein eL15 (rpl15) of Silurus meridionalis (Southern catfish).